A 623-amino-acid polypeptide reads, in one-letter code: Ciliated left-right organizer metallopeptidase (623 aa).

An N-terminal signal peptide occupies residues 1–20 (MSFLLCIGILLLPWFPCVCG). Topologically, residues 21–578 (KCIFDQIQRS…LFLVSEAKIS (558 aa)) are extracellular. Residue His249 participates in Zn(2+) binding. Glu250 is a catalytic residue. The Zn(2+) site is built by His253 and His326. The helical transmembrane segment at 579–599 (LAAVLSLMAVFALLSAAVLLY) threads the bilayer. Topologically, residues 600–623 (RKNLSVRVHAASYRTPLPHILYRN) are cytoplasmic.

The protein belongs to the peptidase M8 family. Zn(2+) is required as a cofactor. As to expression, expressed specifically in dorsal forerunner cells (DFCs) that form a ciliated Kupffer's vesicle later.

The protein localises to the membrane. Its function is as follows. Plays an essential role for patterning the left-right axis. Requires solely on the left side, downstream of the leftward flow, but upstream of dand5, a nodal inhibitor involved in left-right patterning. The sequence is that of Ciliated left-right organizer metallopeptidase (cirop) from Danio rerio (Zebrafish).